The sequence spans 432 residues: Adenylosuccinate synthetase (432 aa).

Residues 13–19 and 41–43 each bind GTP; these read GDEGKGK and GHT. Aspartate 14 acts as the Proton acceptor in catalysis. Positions 14 and 41 each coordinate Mg(2+). IMP contacts are provided by residues 14–17, 39–42, threonine 131, arginine 145, glutamine 226, threonine 241, and arginine 305; these read DEGK and NAGH. Histidine 42 (proton donor) is an active-site residue. Position 301-307 (301-307) interacts with substrate; the sequence is SVTGRAR. Residues arginine 307, 333-335, and 416-418 contribute to the GTP site; these read KLD and STG.

This sequence belongs to the adenylosuccinate synthetase family. In terms of assembly, homodimer. Mg(2+) is required as a cofactor.

It is found in the cytoplasm. The catalysed reaction is IMP + L-aspartate + GTP = N(6)-(1,2-dicarboxyethyl)-AMP + GDP + phosphate + 2 H(+). Its pathway is purine metabolism; AMP biosynthesis via de novo pathway; AMP from IMP: step 1/2. Its function is as follows. Plays an important role in the de novo pathway of purine nucleotide biosynthesis. Catalyzes the first committed step in the biosynthesis of AMP from IMP. The protein is Adenylosuccinate synthetase of Neisseria meningitidis serogroup A / serotype 4A (strain DSM 15465 / Z2491).